Reading from the N-terminus, the 282-residue chain is UDP-3-O-acyl-N-acetylglucosamine deacetylase (282 aa).

The Zn(2+) site is built by H74, H226, and D230. H253 (proton donor) is an active-site residue.

Belongs to the LpxC family. It depends on Zn(2+) as a cofactor.

The catalysed reaction is a UDP-3-O-[(3R)-3-hydroxyacyl]-N-acetyl-alpha-D-glucosamine + H2O = a UDP-3-O-[(3R)-3-hydroxyacyl]-alpha-D-glucosamine + acetate. It participates in glycolipid biosynthesis; lipid IV(A) biosynthesis; lipid IV(A) from (3R)-3-hydroxytetradecanoyl-[acyl-carrier-protein] and UDP-N-acetyl-alpha-D-glucosamine: step 2/6. Catalyzes the hydrolysis of UDP-3-O-myristoyl-N-acetylglucosamine to form UDP-3-O-myristoylglucosamine and acetate, the committed step in lipid A biosynthesis. This chain is UDP-3-O-acyl-N-acetylglucosamine deacetylase, found in Aquifex aeolicus (strain VF5).